A 292-amino-acid polypeptide reads, in one-letter code: MKSEAKDGEEESLQTAFKKLRVDASGSVASLSVGEGTGVRAPVRTATDDTKPKTTCASKDSWHGSTRKSSRGAVRTQRRRRSKSPVLHPPKFIHCSTIASSSSSQLKHKSQTDSPDGSSGLGISSPKEFSAGESSTSLDANHTGAVVEPLRTSVPRLPSESKKEDSSDATQVPQASLKASDLSDFQSVSKLNQGKPCTCIGKECQCKRWHDMEVYSFSGLQSVPPLAPERRSTLEDYSQSLHARTLSGSPRSCSEQARVFVDDVTIEDLSGYMEYYLYIPKKMSHMAEMMYT.

A disordered region spans residues 24–178; sequence ASGSVASLSV…ATQVPQASLK (155 aa). The segment covering 65–83 has biased composition (basic residues); it reads STRKSSRGAVRTQRRRRSK. Phosphothreonine is present on residues Thr143 and Thr233.

In Homo sapiens (Human), this protein is Oxidative stress-responsive serine-rich protein 1 (OSER1).